We begin with the raw amino-acid sequence, 296 residues long: Transcription factor bHLH99 (296 aa).

Residues 99-150 (NQRMNHIAVERNRRKQMNHFLSILKSMMPLSYSQPNDQASIIEGTISYLKKL) form the bHLH domain.

Homodimer. As to expression, expressed constitutively in roots, stems, and flowers.

It is found in the nucleus. This Arabidopsis thaliana (Mouse-ear cress) protein is Transcription factor bHLH99 (BHLH99).